A 274-amino-acid polypeptide reads, in one-letter code: MRKLTLLPLLLIITGLLTVQAAELHFQVFIKGYNGTAELGIFGENLSKVETVKNGSIISLPAGNYTLTLFALNKTFVKDLRLDSNKTVTFNLLFTNRTENLSMMRHAIVQPSLEVFEIVLITNSGGENFEGDLAIPLPEHTGLKISDSSLSFLDFSDLNGNLTLKKLIVPANSTGEVSITYRLVKPKLSLSGAENQTVLIFTTLPVTNQSNAAYRGVQQFKGVDYSVYQCKTKCVLEFKVEPEIKIDKTSAFVILTASALIFIYLFTKRGGWEK.

Positions 1–21 (MRKLTLLPLLLIITGLLTVQA) are cleaved as a signal peptide. A helical transmembrane segment spans residues 249 to 266 (TSAFVILTASALIFIYLF).

The protein resides in the membrane. This is an uncharacterized protein from Archaeoglobus fulgidus (strain ATCC 49558 / DSM 4304 / JCM 9628 / NBRC 100126 / VC-16).